Consider the following 813-residue polypeptide: Homeobox-leucine zipper protein ROC4 (813 aa).

Positions 62-112 (EVENEMSRSGSDHLDVVSCGDAGGGGGDDDDDEDAEHGNPPKRKKRYHRHT) are disordered. Residues 101–112 (PPKRKKRYHRHT) are compositionally biased toward basic residues. The segment at residues 104–163 (RKKRYHRHTPQQIQELEAMFKECPHPDEKQRAELSKRLGLEPRQVKFWFQNRRTQMKMQL) is a DNA-binding region (homeobox). Residues 152–191 (FQNRRTQMKMQLERHENSLLKQENDKLRSENLSIREATSN) adopt a coiled-coil conformation. The START domain occupies 306 to 559 (AGIDKSLFLE…LQRQCECLAL (254 aa)).

It belongs to the HD-ZIP homeobox family. Class IV subfamily.

Its subcellular location is the nucleus. Its function is as follows. Probable transcription factor. The polypeptide is Homeobox-leucine zipper protein ROC4 (ROC4) (Oryza sativa subsp. japonica (Rice)).